Reading from the N-terminus, the 371-residue chain is Macronuclear solute carrier homolog CR-MSC (371 aa).

Solcar repeat units follow at residues 16 to 111, 120 to 208, and 215 to 304; these read RMNY…FYDK, ARPD…CKEN, and PHWI…LSQF. The next 6 membrane-spanning stretches (helical) occupy residues 22–42, 89–109, 126–146, 184–204, 221–241, and 281–301; these read FAAA…LDMV, TFFF…GYFY, VAAG…IDIV, AGAN…IYDW, LWGT…FDMI, and FGSF…ICYL.

This sequence belongs to the mitochondrial carrier (TC 2.A.29) family.

The protein localises to the membrane. This chain is Macronuclear solute carrier homolog CR-MSC, found in Oxytricha fallax.